The sequence spans 59 residues: Antitoxin Rv0909 (59 aa).

Its function is as follows. Antitoxin component of a type II toxin-antitoxin (TA) system. Upon expression in M.smegmatis neutralizes the effect of cognate toxin Rv0910. The sequence is that of Antitoxin Rv0909 from Mycobacterium tuberculosis (strain ATCC 25618 / H37Rv).